An 89-amino-acid chain; its full sequence is UPF0147 protein TV0625 (89 aa).

The protein belongs to the UPF0147 family.

This is UPF0147 protein TV0625 from Thermoplasma volcanium (strain ATCC 51530 / DSM 4299 / JCM 9571 / NBRC 15438 / GSS1).